Here is a 1308-residue protein sequence, read N- to C-terminus: Transposon TX1 uncharacterized 149 kDa protein (1308 aa).

The Reverse transcriptase domain maps to 494-765; that stretch reads EAFKKGELPL…KIIKYLGVYL (272 aa).

This Xenopus laevis (African clawed frog) protein is Transposon TX1 uncharacterized 149 kDa protein.